A 246-amino-acid polypeptide reads, in one-letter code: Chlorophyll a-b binding protein 6A, chloroplastic (246 aa).

A chloroplast-targeting transit peptide spans M1–M45. W49 contributes to the chlorophyll b binding site. Residues F69, E88, and H91 each contribute to the chlorophyll a site. Residue R93 coordinates chlorophyll b. A helical transmembrane segment spans residues W94–V114. L130 is a chlorophyll a binding site. Residues P133–V153 traverse the membrane as a helical segment. 3 residues coordinate chlorophyll b: V134, E154, and R157. Chlorophyll a is bound by residues K191, E192, N195, R197, Q209, and H225.

Belongs to the light-harvesting chlorophyll a/b-binding (LHC) protein family. In terms of assembly, the LHC complex consists of chlorophyll a-b binding proteins. The cofactor is Binds at least 14 chlorophylls (8 Chl-a and 6 Chl-b) and carotenoids such as lutein and neoxanthin.. Post-translationally, photoregulated by reversible phosphorylation of its threonine residues.

The protein localises to the plastid. It is found in the chloroplast thylakoid membrane. Functionally, the light-harvesting complex (LHC) functions as a light receptor, it captures and delivers excitation energy to photosystems with which it is closely associated. The chain is Chlorophyll a-b binding protein 6A, chloroplastic (CAB6A) from Solanum lycopersicum (Tomato).